A 341-amino-acid chain; its full sequence is Malate dehydrogenase, mitochondrial (341 aa).

NAD(+) is bound by residues 35–41 and Asp61; that span reads GAAGGIG. Substrate-binding residues include Arg108 and Arg114. NAD(+) contacts are provided by residues Asn121 and 144-146; that span reads ITN. Residues Asn146 and Arg180 each coordinate substrate. His204 serves as the catalytic Proton acceptor. Residue Met255 coordinates NAD(+).

The protein belongs to the LDH/MDH superfamily. MDH type 1 family. As to quaternary structure, homodimer.

Its subcellular location is the mitochondrion matrix. The catalysed reaction is (S)-malate + NAD(+) = oxaloacetate + NADH + H(+). Its function is as follows. Catalyzes the reversible conversion of (S)-malate to oxaloacetate in the citric acid cycle. The polypeptide is Malate dehydrogenase, mitochondrial (Caenorhabditis elegans).